The following is a 153-amino-acid chain: FAD synthase (153 aa).

Residues 9 to 10 (TF), 14 to 17 (HPGH), and Asp92 each bind ATP.

The protein belongs to the archaeal FAD synthase family. In terms of assembly, homodimer. A divalent metal cation is required as a cofactor.

It carries out the reaction FMN + ATP + H(+) = FAD + diphosphate. It functions in the pathway cofactor biosynthesis; FAD biosynthesis; FAD from FMN: step 1/1. Functionally, catalyzes the transfer of the AMP portion of ATP to flavin mononucleotide (FMN) to produce flavin adenine dinucleotide (FAD) coenzyme. The polypeptide is FAD synthase (Halorubrum lacusprofundi (strain ATCC 49239 / DSM 5036 / JCM 8891 / ACAM 34)).